The following is a 624-amino-acid chain: Actin-related protein 8 (624 aa).

Met1 carries the post-translational modification N-acetylmethionine. The segment covering 1-25 has biased composition (basic and acidic residues); the sequence is MTQAEKGDAENGKEKGGEKEKEQRG. The tract at residues 1–29 is disordered; the sequence is MTQAEKGDAENGKEKGGEKEKEQRGVKRP. ATP-binding residues include Ser55 and Thr56. The residue at position 132 (Ser132) is a Phosphoserine. An ATP-binding site is contributed by 283–286; that stretch reads DVGD. Ser412 is subject to Phosphoserine. Positions 430–462 are disordered; the sequence is SKQEQSAKATADRKSASKPIGFEGDLRGQSSDL.

Belongs to the actin family. ARP8 subfamily. In terms of assembly, component of the chromatin remodeling INO80 complex; specifically part of a complex module associated with the DBINO domain of INO80. Exists as monomers and dimers, but the dimer is most probably the biologically relevant form required for stable interactions with histones that exploits the twofold symmetry of the nucleosome core.

The protein resides in the nucleus. The protein localises to the chromosome. Its function is as follows. Plays an important role in the functional organization of mitotic chromosomes. Exhibits low basal ATPase activity, and unable to polymerize. Functionally, proposed core component of the chromatin remodeling INO80 complex which is involved in transcriptional regulation, DNA replication and probably DNA repair. Required for the recruitment of INO80 (and probably the INO80 complex) to sites of DNA damage Strongly prefer nucleosomes and H3-H4 tetramers over H2A-H2B dimers, suggesting it may act as a nucleosome recognition module within the complex. This chain is Actin-related protein 8 (Actr8), found in Mus musculus (Mouse).